We begin with the raw amino-acid sequence, 210 residues long: Transcriptional regulator DauR (210 aa).

Belongs to the DauR family.

Its function is as follows. DauR represses the dauBAR operon. This is Transcriptional regulator DauR from Pseudomonas aeruginosa (strain ATCC 15692 / DSM 22644 / CIP 104116 / JCM 14847 / LMG 12228 / 1C / PRS 101 / PAO1).